A 327-amino-acid chain; its full sequence is Vacuolar protein sorting-associated protein 26A (327 aa).

The tract at residues 305–327 is disordered; that stretch reads RNFHQRYESPEPRPSLSAEQPEM.

This sequence belongs to the VPS26 family. In terms of assembly, component of the heterotrimeric retromer cargo-selective complex (CSC) which is believed to associate with variable sorting nexins to form functionally distinct retromer complex variants.

It is found in the cytoplasm. It localises to the endosome membrane. The protein localises to the early endosome. Functionally, acts as a component of the retromer cargo-selective complex (CSC). The CSC is believed to be the core functional component of retromer or respective retromer complex variants acting to prevent missorting of selected transmembrane cargo proteins into the lysosomal degradation pathway. Retromer mediates retrograde transport of cargo proteins from endosomes to the trans-Golgi network (TGN). The sequence is that of Vacuolar protein sorting-associated protein 26A (vps26a) from Danio rerio (Zebrafish).